The chain runs to 376 residues: Multiphosphoryl transfer protein (376 aa).

One can recognise a PTS EIIA type-2 domain in the interval 2–142 (FQLSVQDIHP…EELRALLMGE (141 aa)). The active-site Tele-phosphohistidine intermediate; for EIIA activity is His-62. Position 62 is a phosphohistidine; by HPr (His-62). Residues 156-284 (TLDVIASSLV…LTSDDALTDD (129 aa)) are m domain. In terms of domain architecture, HPr spans 285–375 (VLSAEFVVRN…DAIAAGLGEG (91 aa)). His-299 acts as the Pros-phosphohistidine intermediate; for HPr activity in catalysis. His-299 is subject to Phosphohistidine; by EI.

It is found in the cytoplasm. Functionally, the phosphoenolpyruvate-dependent sugar phosphotransferase system (sugar PTS), a major carbohydrate active transport system, catalyzes the phosphorylation of incoming sugar substrates concomitantly with their translocation across the cell membrane. The enzyme II FruAB PTS system is involved in fructose transport. The chain is Multiphosphoryl transfer protein (fruB) from Salmonella typhimurium (strain LT2 / SGSC1412 / ATCC 700720).